The sequence spans 570 residues: Sulfite reductase [NADPH] hemoprotein beta-component (570 aa).

Positions 434, 440, 479, and 483 each coordinate [4Fe-4S] cluster. Siroheme is bound at residue C483.

This sequence belongs to the nitrite and sulfite reductase 4Fe-4S domain family. As to quaternary structure, alpha(8)-beta(8). The alpha component is a flavoprotein, the beta component is a hemoprotein. Siroheme serves as cofactor. The cofactor is [4Fe-4S] cluster.

The catalysed reaction is hydrogen sulfide + 3 NADP(+) + 3 H2O = sulfite + 3 NADPH + 4 H(+). It participates in sulfur metabolism; hydrogen sulfide biosynthesis; hydrogen sulfide from sulfite (NADPH route): step 1/1. Functionally, component of the sulfite reductase complex that catalyzes the 6-electron reduction of sulfite to sulfide. This is one of several activities required for the biosynthesis of L-cysteine from sulfate. The chain is Sulfite reductase [NADPH] hemoprotein beta-component from Escherichia coli (strain B / BL21-DE3).